The following is a 363-amino-acid chain: Pulmonary surfactant-associated protein B (363 aa).

An N-terminal signal peptide occupies residues 1–16 (LLWLLLLPTLCGLGAA). Positions 17–180 (DWSAPSLACA…PHTQDLSEQQ (164 aa)) are excised as a propeptide. One can recognise a Saposin A-type domain in the interval 18–58 (WSAPSLACARGPAFWCQSLEQALQCRALGHCLQEVWGNARA). 3 consecutive Saposin B-type domains span residues 58–140 (ADDL…KPGL), 184–261 (PLPY…SHED), and 277–352 (QESK…RTTF). Intrachain disulfides connect C62/C136, C65/C130, C93/C105, C188/C257, C191/C251, C215/C226, C281/C348, C284/C342, and C307/C317. The propeptide occupies 260-363 (EDSAGPALAS…PLQCIHIPHF (104 aa)). Residue N293 is glycosylated (N-linked (GlcNAc...) asparagine).

As to quaternary structure, homodimer; disulfide-linked.

The protein resides in the secreted. It localises to the extracellular space. It is found in the surface film. In terms of biological role, pulmonary surfactant-associated proteins promote alveolar stability by lowering the surface tension at the air-liquid interface in the peripheral air spaces. SP-B increases the collapse pressure of palmitic acid to nearly 70 millinewtons per meter. The polypeptide is Pulmonary surfactant-associated protein B (SFTPB) (Canis lupus familiaris (Dog)).